The chain runs to 402 residues: 4-hydroxy-3-methylbut-2-enyl diphosphate reductase (402 aa).

C66 contributes to the [4Fe-4S] cluster binding site. H96 is a binding site for (2E)-4-hydroxy-3-methylbut-2-enyl diphosphate. H96 provides a ligand contact to dimethylallyl diphosphate. H96 provides a ligand contact to isopentenyl diphosphate. C157 contributes to the [4Fe-4S] cluster binding site. H185 is a binding site for (2E)-4-hydroxy-3-methylbut-2-enyl diphosphate. Residue H185 participates in dimethylallyl diphosphate binding. H185 serves as a coordination point for isopentenyl diphosphate. The Proton donor role is filled by E187. T250 is a (2E)-4-hydroxy-3-methylbut-2-enyl diphosphate binding site. A [4Fe-4S] cluster-binding site is contributed by C288. (2E)-4-hydroxy-3-methylbut-2-enyl diphosphate is bound by residues S317, S318, N319, and S379. Residues S317, S318, N319, and S379 each contribute to the dimethylallyl diphosphate site. S317, S318, N319, and S379 together coordinate isopentenyl diphosphate.

The protein belongs to the IspH family. The cofactor is [4Fe-4S] cluster.

It carries out the reaction isopentenyl diphosphate + 2 oxidized [2Fe-2S]-[ferredoxin] + H2O = (2E)-4-hydroxy-3-methylbut-2-enyl diphosphate + 2 reduced [2Fe-2S]-[ferredoxin] + 2 H(+). The catalysed reaction is dimethylallyl diphosphate + 2 oxidized [2Fe-2S]-[ferredoxin] + H2O = (2E)-4-hydroxy-3-methylbut-2-enyl diphosphate + 2 reduced [2Fe-2S]-[ferredoxin] + 2 H(+). Its pathway is isoprenoid biosynthesis; dimethylallyl diphosphate biosynthesis; dimethylallyl diphosphate from (2E)-4-hydroxy-3-methylbutenyl diphosphate: step 1/1. It functions in the pathway isoprenoid biosynthesis; isopentenyl diphosphate biosynthesis via DXP pathway; isopentenyl diphosphate from 1-deoxy-D-xylulose 5-phosphate: step 6/6. Functionally, catalyzes the conversion of 1-hydroxy-2-methyl-2-(E)-butenyl 4-diphosphate (HMBPP) into a mixture of isopentenyl diphosphate (IPP) and dimethylallyl diphosphate (DMAPP). Acts in the terminal step of the DOXP/MEP pathway for isoprenoid precursor biosynthesis. In Nostoc sp. (strain PCC 7120 / SAG 25.82 / UTEX 2576), this protein is 4-hydroxy-3-methylbut-2-enyl diphosphate reductase.